Here is a 152-residue protein sequence, read N- to C-terminus: NADH-quinone oxidoreductase subunit A 2 (152 aa).

3 helical membrane-spanning segments follow: residues 8 to 28, 63 to 83, and 90 to 110; these read FGKV…GYVS, FYVV…LFPW, and LGGF…LGLV.

Belongs to the complex I subunit 3 family. NDH-1 is composed of 14 different subunits. Subunits NuoA, H, J, K, L, M, N constitute the membrane sector of the complex.

Its subcellular location is the cell inner membrane. It catalyses the reaction a quinone + NADH + 5 H(+)(in) = a quinol + NAD(+) + 4 H(+)(out). NDH-1 shuttles electrons from NADH, via FMN and iron-sulfur (Fe-S) centers, to quinones in the respiratory chain. The immediate electron acceptor for the enzyme in this species is believed to be a menaquinone. Couples the redox reaction to proton translocation (for every two electrons transferred, four hydrogen ions are translocated across the cytoplasmic membrane), and thus conserves the redox energy in a proton gradient. The protein is NADH-quinone oxidoreductase subunit A 2 of Chloroherpeton thalassium (strain ATCC 35110 / GB-78).